A 327-amino-acid polypeptide reads, in one-letter code: D-alanine--D-alanine ligase (327 aa).

An ATP-grasp domain is found at Lys113 to Ala312. Val139–Thr194 is a binding site for ATP. Residues Asp266, Glu279, and Asn281 each contribute to the Mg(2+) site.

This sequence belongs to the D-alanine--D-alanine ligase family. Requires Mg(2+) as cofactor. Mn(2+) serves as cofactor.

It is found in the cytoplasm. The catalysed reaction is 2 D-alanine + ATP = D-alanyl-D-alanine + ADP + phosphate + H(+). The protein operates within cell wall biogenesis; peptidoglycan biosynthesis. Cell wall formation. This Cupriavidus taiwanensis (strain DSM 17343 / BCRC 17206 / CCUG 44338 / CIP 107171 / LMG 19424 / R1) (Ralstonia taiwanensis (strain LMG 19424)) protein is D-alanine--D-alanine ligase.